The sequence spans 460 residues: MAEAVFRAPKRKRRVYESYESPLPIPFGQDQGPRKEFRIFQAEMISNNVVVRGTEDMEQLYGKGYFGKGILSRSRPNFTIANPTLAARWKGVQTDMPIITSEKYQHRVEWARDFLRRQGHDESTVQKILTDYTEPLELPCREEKEETPQHEPLSSKADSSLEGRVEKDELPVTPGGAGQSDDLPGLGTHSDCLQEGPGHATLAAASPSSHNGHVAEDPEVLPQETLVPQGGLWPEASSQAAGEKRAAHEYVLIEEELCGAQEEEAAAASDEKLLKRKKLVCRRNPYRIFEYLQLSLEEAFFLAYALGCLSIYYEKEPLTIVKLWQAFTAVQPTFRTTYMAYHYFRSKGWVPKVGLKYGTDLLLYRKGPPFYHASYSVIIELLDDNYEGSLRRPFSWKSLAALSRVSGNVSKELMLCYLIKPSTMTAEDMETPECMKRIQVQEVILSRWVSSRERSDQDEL.

The disordered stretch occupies residues 143 to 215; it reads EKEETPQHEP…SPSSHNGHVA (73 aa). Over residues 159-170 the composition is skewed to basic and acidic residues; the sequence is SSLEGRVEKDEL. Residues Tyr-364 and His-372 contribute to the active site. Residues Ser-403, Ser-406, and Ser-410 each carry the phosphoserine modification. Residue Lys-411 is part of the active site.

It belongs to the tRNA-intron endonuclease family. In terms of assembly, tRNA splicing endonuclease is a heterotetramer composed of TSEN2, TSEN15, TSEN34/LENG5 and TSEN54. tRNA splicing endonuclease complex also contains proteins of the pre-mRNA 3'-end processing machinery such as CLP1, CPSF1, CPSF4 and CSTF2.

Its subcellular location is the nucleus. The protein localises to the nucleolus. It catalyses the reaction pretRNA = a 3'-half-tRNA molecule with a 5'-OH end + a 5'-half-tRNA molecule with a 2',3'-cyclic phosphate end + an intron with a 2',3'-cyclic phosphate and a 5'-hydroxyl terminus.. In terms of biological role, constitutes one of the two catalytic subunit of the tRNA-splicing endonuclease complex, a complex responsible for identification and cleavage of the splice sites in pre-tRNA. It cleaves pre-tRNA at the 5'- and 3'-splice sites to release the intron. The products are an intron and two tRNA half-molecules bearing 2',3'-cyclic phosphate and 5'-OH termini. There are no conserved sequences at the splice sites, but the intron is invariably located at the same site in the gene, placing the splice sites an invariant distance from the constant structural features of the tRNA body. Probably carries the active site for 5'-splice site cleavage. The tRNA splicing endonuclease is also involved in mRNA processing via its association with pre-mRNA 3'-end processing factors, establishing a link between pre-tRNA splicing and pre-mRNA 3'-end formation, suggesting that the endonuclease subunits function in multiple RNA-processing events. The chain is tRNA-splicing endonuclease subunit Sen2 (Tsen2) from Mus musculus (Mouse).